The primary structure comprises 146 residues: Microsomal glutathione S-transferase 2 (146 aa).

3 helical membrane-spanning segments follow: residues 6-26 (ILLA…AMQV), 59-79 (FYPI…QVFA), and 111-131 (SLGV…NSFL).

The protein belongs to the MAPEG family. In terms of assembly, homotrimer.

The protein localises to the endoplasmic reticulum membrane. Its subcellular location is the microsome membrane. It carries out the reaction RX + glutathione = an S-substituted glutathione + a halide anion + H(+). The catalysed reaction is 1-chloro-2,4-dinitrobenzene + glutathione = 2,4-dinitrophenyl-S-glutathione + chloride + H(+). The enzyme catalyses leukotriene C4 = leukotriene A4 + glutathione. It catalyses the reaction (5S)-hydroperoxy-(6E,8Z,11Z,14Z)-eicosatetraenoate + 2 glutathione = (5S)-hydroxy-(6E,8Z,11Z,14Z)-eicosatetraenoate + glutathione disulfide + H2O. Each monomer binds on GSH molecule but only one subunit is catalytically active. Its function is as follows. Catalyzes several different glutathione-dependent reactions. Catalyzes the glutathione-dependent reduction of lipid hydroperoxides, such as 5-HPETE. Has glutathione transferase activity, toward xenobiotic electrophiles, such as 1-chloro-2, 4-dinitrobenzene (CDNB). Also catalyzes the conjugation of leukotriene A4 with reduced glutathione to form leukotriene C4 (LTC4). Involved in oxidative DNA damage induced by ER stress and anticancer agents by activating LTC4 biosynthetic machinery in nonimmune cells. In Bos taurus (Bovine), this protein is Microsomal glutathione S-transferase 2 (MGST2).